The chain runs to 968 residues: Translation initiation factor IF-2 (968 aa).

Positions 305-319 are enriched in low complexity; that stretch reads KPAAAAGAPGAPGAA. Positions 305–376 are disordered; it reads KPAAAAGAPG…NDRDARPEST (72 aa). The 168-residue stretch at 468–635 folds into the tr-type G domain; the sequence is PRAPVVTVMG…QVLLQAEVLE (168 aa). Residues 477–484 are G1; the sequence is GHVDHGKT. 477–484 provides a ligand contact to GTP; it reads GHVDHGKT. The interval 502-506 is G2; sequence GITQH. The segment at 523-526 is G3; the sequence is DTPG. Residues 523-527 and 577-580 contribute to the GTP site; these read DTPGH and NKID. The G4 stretch occupies residues 577 to 580; that stretch reads NKID. Residues 613 to 615 form a G5 region; sequence SAR.

This sequence belongs to the TRAFAC class translation factor GTPase superfamily. Classic translation factor GTPase family. IF-2 subfamily.

The protein localises to the cytoplasm. Its function is as follows. One of the essential components for the initiation of protein synthesis. Protects formylmethionyl-tRNA from spontaneous hydrolysis and promotes its binding to the 30S ribosomal subunits. Also involved in the hydrolysis of GTP during the formation of the 70S ribosomal complex. The protein is Translation initiation factor IF-2 of Polaromonas sp. (strain JS666 / ATCC BAA-500).